Consider the following 177-residue polypeptide: Putative adenylate kinase (177 aa).

5 residues coordinate ATP: Gly-10, Gly-12, Lys-13, Thr-14, and Thr-15. Positions 30–50 (SLRDYAIEKGIGEMKGDELEV) are NMP. The tract at residues 99-109 (ERGYSREKVGE) is LID. Arg-100 and Lys-138 together coordinate ATP.

The protein belongs to the adenylate kinase family. AK6 subfamily. As to quaternary structure, interacts with uS11. Not a structural component of 40S pre-ribosomes, but transiently interacts with them by binding to uS11.

The enzyme catalyses AMP + ATP = 2 ADP. It carries out the reaction ATP + H2O = ADP + phosphate + H(+). Functionally, broad-specificity nucleoside monophosphate (NMP) kinase that catalyzes the reversible transfer of the terminal phosphate group between nucleoside triphosphates and monophosphates. Also has ATPase activity. Involved in the late maturation steps of the 30S ribosomal particles, specifically 16S rRNA maturation. While NMP activity is not required for ribosome maturation, ATPase activity is. Associates transiently with small ribosomal subunit protein uS11. ATP hydrolysis breaks the interaction with uS11. May temporarily remove uS11 from the ribosome to enable a conformational change of the ribosomal RNA that is needed for the final maturation step of the small ribosomal subunit. The polypeptide is Putative adenylate kinase (Thermococcus gammatolerans (strain DSM 15229 / JCM 11827 / EJ3)).